The chain runs to 379 residues: Chaperone protein DnaJ (379 aa).

In terms of domain architecture, J spans 5 to 69 (EFYDRLGVSK…QKRAAYDQYG (65 aa)). The CR-type zinc finger occupies 135 to 217 (GAEKEVSYNR…CHGTGHEKKT (83 aa)). Residues Cys148, Cys151, Cys165, Cys168, Cys191, Cys194, Cys205, and Cys208 each coordinate Zn(2+). CXXCXGXG motif repeat units lie at residues 148–155 (CHTCSGSG), 165–172 (CQKCHGSG), 191–198 (CDVCQGSG), and 205–212 (CPTCHGTG).

It belongs to the DnaJ family. In terms of assembly, homodimer. Zn(2+) serves as cofactor.

It localises to the cytoplasm. Its function is as follows. Participates actively in the response to hyperosmotic and heat shock by preventing the aggregation of stress-denatured proteins and by disaggregating proteins, also in an autonomous, DnaK-independent fashion. Unfolded proteins bind initially to DnaJ; upon interaction with the DnaJ-bound protein, DnaK hydrolyzes its bound ATP, resulting in the formation of a stable complex. GrpE releases ADP from DnaK; ATP binding to DnaK triggers the release of the substrate protein, thus completing the reaction cycle. Several rounds of ATP-dependent interactions between DnaJ, DnaK and GrpE are required for fully efficient folding. Also involved, together with DnaK and GrpE, in the DNA replication of plasmids through activation of initiation proteins. This Streptococcus agalactiae serotype V (strain ATCC BAA-611 / 2603 V/R) protein is Chaperone protein DnaJ.